We begin with the raw amino-acid sequence, 355 residues long: 45 kDa calcium-binding protein (355 aa).

The signal sequence occupies residues 1 to 29 (MASRQGPLCGLAPCCLWLLGVILLMNASA). N-linked (GlcNAc...) asparagine glycosylation is present at N26. 2 EF-hand domains span residues 91–126 (KSRR…KTAE) and 130–165 (EAVA…TKGH). Residue S92 is modified to Phosphoserine. D104, N106, D108, R110, E115, D143, D145, D147, H149, and E154 together coordinate Ca(2+). 2 positions are modified to phosphothreonine: T186 and T210. EF-hand domains follow at residues 226–261 (MLQF…TVEN), 271–306 (WVRD…MNEF), and 307–342 (SALN…FTGS). Ca(2+)-binding residues include D239, D241, D243, K245, and E250. A Phosphothreonine modification is found at T258. Positions 284, 286, and 288 each coordinate Ca(2+). T292 is modified (phosphothreonine). 6 residues coordinate Ca(2+): E295, D320, N322, N324, Y326, and E331. The necessary for intracellular retention in Golgi apparatus lumen stretch occupies residues 302 to 355 (PMNEFSALNEAKQMIAIADENQNHYLEPEEVLKYSEFFTGSKLVDYARSVHEEF).

It belongs to the CREC family.

The protein localises to the golgi apparatus lumen. Its function is as follows. May regulate calcium-dependent activities in the endoplasmic reticulum lumen or post-ER compartment. This Capra hircus (Goat) protein is 45 kDa calcium-binding protein (SDF4).